We begin with the raw amino-acid sequence, 180 residues long: Cell wall / vacuolar inhibitor of fructosidase 2 (180 aa).

Residues 1 to 23 (MASSLIFLLLVTLTFSASTLISA) form the signal peptide. Asn-26 carries N-linked (GlcNAc...) asparagine glycosylation. A disulfide bridge connects residues Cys-35 and Cys-44. 2 N-linked (GlcNAc...) asparagine glycosylation sites follow: Asn-73 and Asn-84. Residues Cys-101 and Cys-141 are joined by a disulfide bond.

Belongs to the PMEI family. As to expression, mostly expressed at low levels in seedlings, stems, leaves and flowers (in all organs), and, to a lower extent, in roots and siliques.

It localises to the vacuole. In terms of biological role, inhibits fructosidases from both cell wall (cell wall invertase CWI) and vacuoles (vacuolar invertase VI). The protein is Cell wall / vacuolar inhibitor of fructosidase 2 (C/VIF2) of Arabidopsis thaliana (Mouse-ear cress).